Reading from the N-terminus, the 662-residue chain is Translation factor guf1, mitochondrial (662 aa).

A mitochondrion-targeting transit peptide spans 1–42 (MRGCLQLARWLSAAPNWPASSLLKAPGSSFATRLFTTTSSYK). A tr-type G domain is found at 64–244 (ERYRNFCIVA…TVVEKIPAPI (181 aa)). GTP contacts are provided by residues 73 to 80 (AHVDHGKS), 137 to 141 (DTPGH), and 191 to 194 (NKVD).

It belongs to the TRAFAC class translation factor GTPase superfamily. Classic translation factor GTPase family. LepA subfamily.

The protein localises to the mitochondrion inner membrane. It carries out the reaction GTP + H2O = GDP + phosphate + H(+). In terms of biological role, promotes mitochondrial protein synthesis. May act as a fidelity factor of the translation reaction, by catalyzing a one-codon backward translocation of tRNAs on improperly translocated ribosomes. Binds to mitochondrial ribosomes in a GTP-dependent manner. The protein is Translation factor guf1, mitochondrial (guf1) of Emericella nidulans (strain FGSC A4 / ATCC 38163 / CBS 112.46 / NRRL 194 / M139) (Aspergillus nidulans).